We begin with the raw amino-acid sequence, 278 residues long: Lipoyl-[GcvH]:protein N-lipoyltransferase (278 aa).

In terms of domain architecture, BPL/LPL catalytic spans 44-250 (RMAPSTVRGW…SLRHYAGDLV (207 aa)). Residue Cys149 is the Acyl-thioester intermediate of the active site.

The protein belongs to the octanoyltransferase LipL family.

It catalyses the reaction N(6)-[(R)-lipoyl]-L-lysyl-[glycine-cleavage complex H protein] + L-lysyl-[lipoyl-carrier protein] = L-lysyl-[glycine-cleavage complex H protein] + N(6)-[(R)-lipoyl]-L-lysyl-[lipoyl-carrier protein]. It functions in the pathway protein modification; protein lipoylation via exogenous pathway. Catalyzes the amidotransfer (transamidation) of the lipoyl moiety from lipoyl-GcvH to the lipoyl domain of the E2 subunit of lipoate-dependent enzymes. Takes part in a pathway for scavenging of lipoic acid derived from eukaryotic host cells. Cannot use lipoyl-tripeptide (DK(L)A), lipoamide (LD), or free lipoate as substrate. This chain is Lipoyl-[GcvH]:protein N-lipoyltransferase, found in Listeria monocytogenes serovar 1/2a (strain ATCC BAA-679 / EGD-e).